The following is a 155-amino-acid chain: WPP domain-containing protein 1 (155 aa).

Disordered stretches follow at residues 1 to 41 and 124 to 155; these read MAET…VTIS and SVKAKSNVASPPPKDGDGIESAVDSKIDSSEA. A compositionally biased stretch (low complexity) spans 7 to 39; it reads ESITTSSPPPISETENSTTLPTTETEKNPNPVT. The WPP stretch occupies residues 28-131; that stretch reads TTETEKNPNP…LESVKAKSNV (104 aa). A compositionally biased stretch (basic and acidic residues) spans 146–155; that stretch reads VDSKIDSSEA.

In terms of assembly, binds to FPP proteins. Interacts with WAP, WIP1, WIP2 and WIP3 through its WPP domain. Interacts with HSP70-1, HSP70-3 and WIT1. Component of a ternary complex composed of WPP1, HSP70-1 and WIT1. As to expression, expressed in roots, stems and leaves.

It is found in the nucleus envelope. The protein localises to the cytoplasm. The protein resides in the nucleus. It localises to the golgi apparatus. Its subcellular location is the nucleus matrix. Functionally, regulates the mitotic activity in roots. Plays a role with HSP70-1 in facilitating WIT1 nuclear envelope targeting. The chain is WPP domain-containing protein 1 (WPP1) from Arabidopsis thaliana (Mouse-ear cress).